A 793-amino-acid chain; its full sequence is Facilitated trehalose transporter Tret1 (793 aa).

Residues 1-326 (MNRKVGPVLE…LEVYRPTTNP (326 aa)) lie on the Cytoplasmic side of the membrane. Disordered stretches follow at residues 99-148 (EKAK…EHKS) and 213-235 (RHIS…FEPS). Over residues 104 to 113 (KSSLKSSRVS) the composition is skewed to low complexity. Over residues 115 to 125 (DQEDDRFDEDE) the composition is skewed to acidic residues. Basic and acidic residues predominate over residues 213–223 (RHISFKFDKEP). Residues 327-347 (IYIWTQVLAALSVSLGSMVVG) form a helical membrane-spanning segment. The Extracellular segment spans residues 348-376 (FSSAYTSPALVSMKDRNITSFEVTDQSGS). N-linked (GlcNAc...) asparagine glycosylation occurs at Asn364. A helical membrane pass occupies residues 377 to 397 (WVGGIMPLAGLAGGILGGPMI). At 398 to 411 (EYLGRKNTILATAT) the chain is on the cytoplasmic side. A helical transmembrane segment spans residues 412–432 (PFIISWLLIGCATHVAMVLVG). The Extracellular segment spans residues 433–434 (RA). Residues 435 to 455 (LSGLCVGIASLSLPVYLGETV) traverse the membrane as a helical segment. Residues 456-460 (QPEVR) lie on the Cytoplasmic side of the membrane. Residues 461–481 (GTLGLLPTAFGNIGILLCFVA) form a helical membrane-spanning segment. Topologically, residues 482 to 488 (GKYLDWS) are extracellular. Residues 489–509 (GLAFLGAALPIPFLLLMFLIP) traverse the membrane as a helical segment. At 510–572 (ETPRWYVSRN…DLLNKANLKP (63 aa)) the chain is on the cytoplasmic side. A helical membrane pass occupies residues 573–593 (LLISLGLMFFQQLSGINAVIF). The Extracellular portion of the chain corresponds to 594–609 (YTVQIFQSAGSTIDEK). Residues 610-630 (LCTIIVGVVNFIATFIATVLI) form a helical membrane-spanning segment. The Cytoplasmic portion of the chain corresponds to 631-636 (DRLGRK). A helical transmembrane segment spans residues 637 to 657 (ILLYISDVAMIITLMTLGTFF). Residues 658–668 (YMKNNGDDVSE) lie on the Extracellular side of the membrane. Residues 669–689 (IGWLPLAAFVVFVVGFSLGFG) form a helical membrane-spanning segment. At 690–703 (PIPWLMMGEILPGK) the chain is on the cytoplasmic side. Residues 704–724 (IRGSAASVATAFNWSCTFVVT) traverse the membrane as a helical segment. Residues 725-737 (KTFADITASIGNH) lie on the Extracellular side of the membrane. The helical transmembrane segment at 738–758 (GAFWMFGSICIVGLLFVIVYV) threads the bilayer. Over 759 to 793 (PETQGKSLEDIERKMMGRVRRMSSVANIKPLSFNM) the chain is Cytoplasmic.

It belongs to the major facilitator superfamily. Sugar transporter (TC 2.A.1.1) family. Trehalose transporter subfamily.

The protein resides in the cell membrane. In terms of biological role, high-capacity facilitative transporter for trehalose. Does not transport maltose, sucrose or lactose. Mediates the bidirectional transfer of trehalose. Responsible for the transport of trehalose synthesized in the fat body and the incorporation of trehalose into other tissues that require a carbon source, thereby regulating trehalose levels in the hemolymph. The sequence is that of Facilitated trehalose transporter Tret1 from Anopheles gambiae (African malaria mosquito).